The sequence spans 396 residues: Elongation factor Tu (396 aa).

Positions 10–206 (KEHVNIGTIG…AVDTWIETPV (197 aa)) constitute a tr-type G domain. Positions 19–26 (GHVDHGKT) are G1. A GTP-binding site is contributed by 19–26 (GHVDHGKT). Thr26 contacts Mg(2+). The interval 60–64 (GITIN) is G2. The G3 stretch occupies residues 81–84 (DCPG). Residues 81–85 (DCPGH) and 136–139 (NKCD) each bind GTP. Residues 136-139 (NKCD) form a G4 region. A G5 region spans residues 176–178 (SAL).

Belongs to the TRAFAC class translation factor GTPase superfamily. Classic translation factor GTPase family. EF-Tu/EF-1A subfamily. In terms of assembly, monomer.

Its subcellular location is the cytoplasm. The enzyme catalyses GTP + H2O = GDP + phosphate + H(+). Functionally, GTP hydrolase that promotes the GTP-dependent binding of aminoacyl-tRNA to the A-site of ribosomes during protein biosynthesis. This chain is Elongation factor Tu, found in Mycoplasmopsis agalactiae (strain NCTC 10123 / CIP 59.7 / PG2) (Mycoplasma agalactiae).